The chain runs to 436 residues: MDALYSHFSQVLEQQRKANTRLVVAFSGGVDSRVLLELAHRYAQEHLLPCCAVHVHHGLSHNADQWVQSCAAWCQEKNIPLTVERVQLDLTQGNSIEEEARNARYQALRAHINADDLLLTGQHADDQVETFLLALKRGSGPKGLSSMAQQMPFSQGRLIRPLLDVRRQEIERCAHAIGLNWVEDESNQDTRYDRNFLRQQILPALSERWPSFAASVQRSATLCAEQEALLDELLLPVFEQLFGEDQSLAITLLSQQSELARFKLFRMWLAKLGHPMPTRHQLSLIWQQVALSQADANPILQLSQGQVRRFNQRLYLVADNQDLSAWHAPITLNTPLALPDGLGTIELTLSRGFGQIALPEQSEALWISFNPEGLSAHPAERGHSRKLKKLFQEYQVPSWLRRRTPILMYHQQVVAVAGLFVDRQFIGQDCELFWRK.

27–32 (SGGVDS) is a binding site for ATP.

It belongs to the tRNA(Ile)-lysidine synthase family.

It localises to the cytoplasm. The enzyme catalyses cytidine(34) in tRNA(Ile2) + L-lysine + ATP = lysidine(34) in tRNA(Ile2) + AMP + diphosphate + H(+). Its function is as follows. Ligates lysine onto the cytidine present at position 34 of the AUA codon-specific tRNA(Ile) that contains the anticodon CAU, in an ATP-dependent manner. Cytidine is converted to lysidine, thus changing the amino acid specificity of the tRNA from methionine to isoleucine. This chain is tRNA(Ile)-lysidine synthase, found in Vibrio vulnificus (strain YJ016).